The chain runs to 469 residues: Adenosylhomocysteinase (469 aa).

Positions 63, 139, and 164 each coordinate substrate. 165 to 167 contributes to the NAD(+) binding site; sequence TTT. Substrate is bound by residues Lys-194 and Asp-198. NAD(+) contacts are provided by residues Asn-199, 228–233, Glu-251, Asn-300, 321–323, and Asn-375; these read GYGDVG and IGH.

This sequence belongs to the adenosylhomocysteinase family. The cofactor is NAD(+).

The protein resides in the cytoplasm. It catalyses the reaction S-adenosyl-L-homocysteine + H2O = L-homocysteine + adenosine. It functions in the pathway amino-acid biosynthesis; L-homocysteine biosynthesis; L-homocysteine from S-adenosyl-L-homocysteine: step 1/1. Its function is as follows. May play a key role in the regulation of the intracellular concentration of adenosylhomocysteine. This Pseudomonas putida (strain GB-1) protein is Adenosylhomocysteinase.